The primary structure comprises 283 residues: Phosphatidylserine decarboxylase proenzyme (283 aa).

Catalysis depends on charge relay system; for autoendoproteolytic cleavage activity residues Asp96, His152, and Ser250. The Schiff-base intermediate with substrate; via pyruvic acid; for decarboxylase activity role is filled by Ser250. Ser250 carries the pyruvic acid (Ser); by autocatalysis modification.

Belongs to the phosphatidylserine decarboxylase family. PSD-B subfamily. Prokaryotic type I sub-subfamily. Heterodimer of a large membrane-associated beta subunit and a small pyruvoyl-containing alpha subunit. It depends on pyruvate as a cofactor. In terms of processing, is synthesized initially as an inactive proenzyme. Formation of the active enzyme involves a self-maturation process in which the active site pyruvoyl group is generated from an internal serine residue via an autocatalytic post-translational modification. Two non-identical subunits are generated from the proenzyme in this reaction, and the pyruvate is formed at the N-terminus of the alpha chain, which is derived from the carboxyl end of the proenzyme. The autoendoproteolytic cleavage occurs by a canonical serine protease mechanism, in which the side chain hydroxyl group of the serine supplies its oxygen atom to form the C-terminus of the beta chain, while the remainder of the serine residue undergoes an oxidative deamination to produce ammonia and the pyruvoyl prosthetic group on the alpha chain. During this reaction, the Ser that is part of the protease active site of the proenzyme becomes the pyruvoyl prosthetic group, which constitutes an essential element of the active site of the mature decarboxylase.

It is found in the cell membrane. The catalysed reaction is a 1,2-diacyl-sn-glycero-3-phospho-L-serine + H(+) = a 1,2-diacyl-sn-glycero-3-phosphoethanolamine + CO2. The protein operates within phospholipid metabolism; phosphatidylethanolamine biosynthesis; phosphatidylethanolamine from CDP-diacylglycerol: step 2/2. Its function is as follows. Catalyzes the formation of phosphatidylethanolamine (PtdEtn) from phosphatidylserine (PtdSer). This Acinetobacter baumannii (strain AB0057) protein is Phosphatidylserine decarboxylase proenzyme.